We begin with the raw amino-acid sequence, 170 residues long: Photosystem I assembly protein Ycf3 (170 aa).

3 TPR repeats span residues 35–68 (AFTY…EIDP), 72–105 (SYIL…NPFL), and 120–153 (GEQA…TPGN).

This sequence belongs to the Ycf3 family.

Its subcellular location is the plastid. The protein localises to the chloroplast thylakoid membrane. Functionally, essential for the assembly of the photosystem I (PSI) complex. May act as a chaperone-like factor to guide the assembly of the PSI subunits. This is Photosystem I assembly protein Ycf3 from Zea mays (Maize).